The sequence spans 67 residues: DNA-directed RNA polymerase subunit omega (67 aa).

It belongs to the RNA polymerase subunit omega family. The RNAP catalytic core consists of 2 alpha, 1 beta, 1 beta' and 1 omega subunit. When a sigma factor is associated with the core the holoenzyme is formed, which can initiate transcription.

It catalyses the reaction RNA(n) + a ribonucleoside 5'-triphosphate = RNA(n+1) + diphosphate. Its function is as follows. Promotes RNA polymerase assembly. Latches the N- and C-terminal regions of the beta' subunit thereby facilitating its interaction with the beta and alpha subunits. The protein is DNA-directed RNA polymerase subunit omega of Ralstonia nicotianae (strain ATCC BAA-1114 / GMI1000) (Ralstonia solanacearum).